The following is a 574-amino-acid chain: M-phase inducer phosphatase 2 (574 aa).

Disordered stretches follow at residues 31-51 and 90-110; these read GFGF…SSSP and RRTS…AGLC. Residue S42 is modified to Phosphoserine. A compositionally biased stretch (low complexity) spans 90–105; that stretch reads RRTSECSLSSESSESS. Position 166 is a phosphoserine; by MELK (S166). S246 is subject to Phosphoserine. At S319 the chain carries Phosphoserine; by MAPKAPK2 and MELK. S319 bears the Phosphoserine; by MELK and MAPK14 mark. The segment at 339-359 is disordered; it reads DVPVLSKRRKSGTPLEEQQLE. S349 bears the Phosphoserine; by AURKA mark. S370 bears the Phosphoserine; by BRSK1 and MAPK14 mark. The Rhodanese domain occupies 425–532; the sequence is IVEKFVIVDC…FFPQHPNFCE (108 aa). The active site involves C481. At S557 the chain carries Phosphoserine.

It belongs to the MPI phosphatase family. As to quaternary structure, interacts with MAPK14 and 14-3-3 proteins. Post-translationally, phosphorylated by BRSK1 in vitro. Phosphorylated by CHEK1, which inhibits the activity of this protein. Phosphorylation at Ser-349 by AURKA might locally participate in the control of the onset of mitosis. Phosphorylation by MELK at Ser-166 promotes localization to the centrosome and the spindle poles during mitosis. Phosphorylation at Ser-319 and Ser-370 by MAPK14 is required for binding to 14-3-3 proteins.

Its subcellular location is the cytoplasm. The protein resides in the cytoskeleton. It is found in the microtubule organizing center. It localises to the centrosome. The protein localises to the spindle pole. It carries out the reaction O-phospho-L-tyrosyl-[protein] + H2O = L-tyrosyl-[protein] + phosphate. Its activity is regulated as follows. Stimulated by B-type cyclins. Functionally, tyrosine protein phosphatase which functions as a dosage-dependent inducer of mitotic progression. Directly dephosphorylates CDK1 and stimulates its kinase activity. Required for G2/M phases of the cell cycle progression and abscission during cytokinesis in a ECT2-dependent manner. The three isoforms seem to have a different level of activity. In Rattus norvegicus (Rat), this protein is M-phase inducer phosphatase 2 (Cdc25b).